Reading from the N-terminus, the 471-residue chain is Adenosylhomocysteinase (471 aa).

Positions 60, 135, and 196 each coordinate substrate. Position 197 to 199 (Thr197 to Thr199) interacts with NAD(+). Substrate-binding residues include Lys226 and Asp230. NAD(+) is bound by residues Asn231, Gly260–Gly265, Glu283, Asn318, Ile339–His341, and Asn387.

The protein belongs to the adenosylhomocysteinase family. Requires NAD(+) as cofactor.

It is found in the cytoplasm. It catalyses the reaction S-adenosyl-L-homocysteine + H2O = L-homocysteine + adenosine. It functions in the pathway amino-acid biosynthesis; L-homocysteine biosynthesis; L-homocysteine from S-adenosyl-L-homocysteine: step 1/1. Functionally, may play a key role in the regulation of the intracellular concentration of adenosylhomocysteine. The polypeptide is Adenosylhomocysteinase (Chlorobium limicola (strain DSM 245 / NBRC 103803 / 6330)).